Consider the following 206-residue polypeptide: Large ribosomal subunit protein uL4 (206 aa).

The segment at 44-78 (RSGNRAQKDREQVKHTTKKPWRQKGTGRARAGMSS) is disordered. Residues 58 to 70 (HTTKKPWRQKGTG) are compositionally biased toward basic residues.

This sequence belongs to the universal ribosomal protein uL4 family. As to quaternary structure, part of the 50S ribosomal subunit.

One of the primary rRNA binding proteins, this protein initially binds near the 5'-end of the 23S rRNA. It is important during the early stages of 50S assembly. It makes multiple contacts with different domains of the 23S rRNA in the assembled 50S subunit and ribosome. Its function is as follows. Forms part of the polypeptide exit tunnel. This is Large ribosomal subunit protein uL4 from Paraburkholderia phytofirmans (strain DSM 17436 / LMG 22146 / PsJN) (Burkholderia phytofirmans).